Consider the following 120-residue polypeptide: Nitrogen regulatory protein GlnK3 (120 aa).

ADP is bound by residues T40 and 48 to 50; that span reads GEQ. ATP contacts are provided by residues T40 and 48–50; that span reads GEQ. 2-oxoglutarate-binding positions include 48-52 and K69; that span reads GEQKG. ADP is bound by residues V75 and 98–101; that span reads GDGR. Residues V75 and 98-101 contribute to the ATP site; that span reads GDGR. Residue G98 coordinates 2-oxoglutarate.

Belongs to the P(II) protein family. As to quaternary structure, homotrimer. Interacts and forms a complex with Amt3.

It localises to the cytoplasm. Activity is influenced by intracellular pools of the effector molecules ATP, ADP and 2-oxoglutarate. It senses the cellular nitrogen status through 2-oxoglutarate, and the energy level of the cell by binding both ATP and ADP with different affinities. ATP and 2-oxoglutarate prohibit binding to Amt3. ADP promotes the complex formation. Functionally, involved in the regulation of nitrogen metabolism. Regulates the activity of its targets by protein-protein interaction in response to the nitrogen status of the cell. Regulates the activity of the ammonia channel Amt3 via direct interaction. The sequence is that of Nitrogen regulatory protein GlnK3 from Archaeoglobus fulgidus (strain ATCC 49558 / DSM 4304 / JCM 9628 / NBRC 100126 / VC-16).